A 255-amino-acid polypeptide reads, in one-letter code: uncharacterized protein (255 aa).

The interval 42–67 (ACSGSPPEPGKGRPDTTPEQEVPVTA) is disordered.

This is an uncharacterized protein from Mycobacterium tuberculosis (strain CDC 1551 / Oshkosh).